The chain runs to 335 residues: 2,4-dienoyl-CoA reductase [(3E)-enoyl-CoA-producing], mitochondrial (335 aa).

The transit peptide at 1 to 34 directs the protein to the mitochondrion; sequence MALLGRAFFAGVSRLPCDPGPQRFFSFGTKTLYQ. Residues lysine 42 and lysine 49 each carry the N6-acetyllysine; alternate modification. Lysine 42 and lysine 49 each carry N6-succinyllysine; alternate. 66 to 71 lines the NADP(+) pocket; it reads GGGTGL. Threonine 69 bears the Phosphothreonine mark. An N6-succinyllysine modification is found at lysine 73. Arginine 91 provides a ligand contact to NADP(+). Arginine 91 is a substrate binding site. Residues lysine 97 and lysine 106 each carry the N6-acetyllysine; alternate modification. N6-succinyllysine; alternate is present on residues lysine 97 and lysine 106. An NADP(+)-binding site is contributed by aspartate 117. Substrate-binding residues include arginine 119 and phenylalanine 149. Tyrosine 199 functions as the Proton acceptor in the catalytic mechanism. Residues lysine 214 and 240–243 each bind NADP(+); that span reads PGPI. Lysine 244 is modified (N6-acetyllysine; alternate). Residue lysine 244 is modified to N6-succinyllysine; alternate. Substrate is bound at residue arginine 251. Lysine 260 is subject to N6-acetyllysine; alternate. Lysine 260 bears the N6-succinyllysine; alternate mark. Lysine 315 carries the N6-acetyllysine modification. Lysine 319 is modified (N6-acetyllysine; alternate). The residue at position 319 (lysine 319) is an N6-succinyllysine; alternate.

The protein belongs to the short-chain dehydrogenases/reductases (SDR) family. 2,4-dienoyl-CoA reductase subfamily. In terms of assembly, homotetramer.

The protein resides in the mitochondrion. The catalysed reaction is a (2E,4E)-dienoyl-CoA + NADPH + H(+) = a 4,5-saturated-(3E)-enoyl-CoA + NADP(+). It carries out the reaction a (2E,4Z)-dienoyl-CoA + NADPH + H(+) = a 4,5-saturated-(3E)-enoyl-CoA + NADP(+). It catalyses the reaction (2E,4E)-hexadienoyl-CoA + NADPH + H(+) = (3E)-hexenoyl-CoA + NADP(+). Auxiliary enzyme of beta-oxidation. It participates in the metabolism of unsaturated fatty enoyl-CoA esters having double bonds in both even- and odd-numbered positions in mitochondria. Catalyzes the NADP-dependent reduction of 2,4-dienoyl-CoA to yield trans-3-enoyl-CoA. This chain is 2,4-dienoyl-CoA reductase [(3E)-enoyl-CoA-producing], mitochondrial (Decr1), found in Mus musculus (Mouse).